We begin with the raw amino-acid sequence, 40 residues long: MKLKSKLFVICLAAAAIFTAAGVSANAEALDFHVTERGMT.

A propeptide spanning residues 1 to 35 is cleaved from the precursor; that stretch reads MKLKSKLFVICLAAAAIFTAAGVSANAEALDFHVT.

This sequence belongs to the Phr family. As to quaternary structure, interacts with RapC and inhibits its interaction with ComA. In terms of processing, secreted with a propeptide domain, which is cleaved in the cell wall by the secreted serine proteases subtilisin, Epr and Vpr to produce a mature signaling peptide. Contains a predicted signal peptide cleavage site in the N-terminal region, however the propeptide is probably subject to only one processing event, at the N-terminal end of the mature peptide.

It is found in the secreted. The protein resides in the cytoplasm. It localises to the host cell. In terms of biological role, signaling molecule that serves as a cell density signal for both genetic competence development and sporulation. Secreted during production, but the mature peptide acts intracellularly, indicating that it needs to be imported into the cell to function. At low concentrations, CSF stimulates expression of the genes controlled by ComA, a transcriptional factor that regulates the development of genetic competence. It includes the srfA operon, which encodes a small protein, ComS, required for competence development, and the surfactin biosynthetic enzymes. Acts by inhibiting RapC, which regulates the activity of ComA. At high concentrations, it inhibits expression of those same ComA-controlled genes, maybe by inhibiting activity of the kinase ComP. In addition, high concentrations of CSF can stimulate sporulation under some conditions. Also inhibits RapB activity, with lower efficiency, but does not act on RapA. Is probably involved in the quorum sensing control of sporulation. CSF is a species-specific signaling molecule that partially compensates for the lack of ComX-mediated communication between different strains of B.subtilis. Its function is as follows. B.subtilis is a well-characterized soil and water saprophyte, but it is also found in enteric flora of many species, including humans. In this environment, CSF can be transported into human intestinal epithelia via OCTN2, a host cell membrane transporter, and can induce cytoprotective heat shock proteins contributing to intestinal homeostasis. Functionally, in addition, in non-domesticated swarming strains of B.subtilis, the residual propeptide exposed on the exterior of the cytoplasmic membrane may have an extracellular role in swarming. This function is probably not dependent on CSF. The protein is Competence and sporulation stimulating factor of Bacillus subtilis (strain 168).